A 376-amino-acid chain; its full sequence is Putative MSV199 domain-containing protein 468L (376 aa).

A coiled-coil region spans residues 178–261; that stretch reads QKREKETMSR…VNTVQKKLDI (84 aa).

The chain is Putative MSV199 domain-containing protein 468L from Invertebrate iridescent virus 6 (IIV-6).